The chain runs to 193 residues: Zinc finger protein 740 (193 aa).

Residues 33–75 (SKQAENGERAGSPDVLRCSSQGHRKDSDKSRSRKDDDSLSEAS) are disordered. Lys34 participates in a covalent cross-link: Glycyl lysine isopeptide (Lys-Gly) (interchain with G-Cter in SUMO2). A Phosphoserine modification is found at Ser44. Residues 55-69 (HRKDSDKSRSRKDDD) are compositionally biased toward basic and acidic residues. C2H2-type zinc fingers lie at residues 101–123 (FVCEHCFGAFRSSYHLKRHILIH) and 129–151 (FECDICDMRFIQKYHLERHKRVH). The C2H2-type 3; atypical zinc finger occupies 157-179 (YQCERCHQCFSRTDRLLRHKRMC).

This sequence belongs to the krueppel C2H2-type zinc-finger protein family.

It is found in the nucleus. In terms of biological role, may be involved in transcriptional regulation. This is Zinc finger protein 740 (ZNF740) from Homo sapiens (Human).